Reading from the N-terminus, the 123-residue chain is uncharacterized protein (123 aa).

This is an uncharacterized protein from Acanthamoeba polyphaga mimivirus (APMV).